Here is a 152-residue protein sequence, read N- to C-terminus: Cuticle protein 64 (152 aa).

7 tandem repeats follow at residues 27 to 30, 33 to 37, 39 to 42, 86 to 89, 92 to 95, 98 to 101, and 127 to 130.

Functionally, component of the cuticle of migratory locust which contains more than 100 different structural proteins. The sequence is that of Cuticle protein 64 from Locusta migratoria (Migratory locust).